Here is a 63-residue protein sequence, read N- to C-terminus: Small ribosomal subunit protein bS21 (63 aa).

It belongs to the bacterial ribosomal protein bS21 family.

The protein is Small ribosomal subunit protein bS21 of Bacteroides fragilis (strain ATCC 25285 / DSM 2151 / CCUG 4856 / JCM 11019 / LMG 10263 / NCTC 9343 / Onslow / VPI 2553 / EN-2).